Reading from the N-terminus, the 305-residue chain is Taste receptor type 2 member 13 (305 aa).

The Extracellular segment spans residues 1 to 7 (MGSNVYG). Residues 8–28 (ILTMVMIAEFVFGNMSNGFIV) traverse the membrane as a helical segment. Residues 29 to 43 (LINCIDWVRKGTLSS) lie on the Cytoplasmic side of the membrane. Residues 44-64 (IGWILLFLAISRMVLIWEMLI) form a helical membrane-spanning segment. Topologically, residues 65 to 88 (TWIKYMKYSFSFVTGTELRGIMFT) are extracellular. A helical transmembrane segment spans residues 89–109 (WVISNHFSLWLATILSIFYLL). Residues 110–128 (KIASFSKPVFLYLKWREKK) lie on the Cytoplasmic side of the membrane. A helical membrane pass occupies residues 129–149 (VLLIVLLGNLIFLMLNILQIN). Residues 150–182 (KHIEHWMYQYERNITWSSRVSDFAGFSNLVLLE) are Extracellular-facing. Asn-162 is a glycosylation site (N-linked (GlcNAc...) asparagine). A helical transmembrane segment spans residues 183–203 (MIVFSVTPFTVALVSFILLIF). The Cytoplasmic segment spans residues 204-232 (SLWKHLQKMHLNSRGERDPSTKAHVNALR). Residues 233-253 (IMVSFLLLYATYFISFFLSLI) form a helical membrane-spanning segment. Over 254–262 (PMAHKTRLG) the chain is Extracellular. Residues 263 to 283 (LMFSITVGLFYPSSHSFILIL) traverse the membrane as a helical segment. Residues 284–305 (GHSNLRQASLWVMTYLKCGQKH) lie on the Cytoplasmic side of the membrane.

It belongs to the G-protein coupled receptor T2R family.

The protein resides in the cell membrane. In terms of biological role, receptor that may play a role in the perception of bitterness and is gustducin-linked. May play a role in sensing the chemical composition of the gastrointestinal content. The activity of this receptor may stimulate alpha gustducin, mediate PLC-beta-2 activation and lead to the gating of TRPM5. The protein is Taste receptor type 2 member 13 of Mus musculus (Mouse).